The chain runs to 114 residues: MQQLIAEITKSQLKTDLPSFRPGDTLRVHVKVVEGTRERIQIFEGVVIKRRGGGISETFTVRKVSYGVGVERTFPIHTPRIAKIEVLRRGKVRRAKLYYLRNLRGKAARIKEIR.

The protein belongs to the bacterial ribosomal protein bL19 family.

This protein is located at the 30S-50S ribosomal subunit interface and may play a role in the structure and function of the aminoacyl-tRNA binding site. The chain is Large ribosomal subunit protein bL19 from Bacillus cytotoxicus (strain DSM 22905 / CIP 110041 / 391-98 / NVH 391-98).